A 461-amino-acid polypeptide reads, in one-letter code: Ornithine decarboxylase (461 aa).

Lysine 69 bears the N6-(pyridoxal phosphate)lysine mark. Pyridoxal 5'-phosphate-binding positions include serine 200, glycine 237, and 274 to 277 (EPGR). At serine 303 the chain carries Phosphoserine; by CK2. 331–332 (YD) serves as a coordination point for substrate. Cysteine 360 serves as the catalytic Proton donor; shared with dimeric partner. Cysteine 360 is subject to S-nitrosocysteine. Aspartate 361 contacts substrate. Tyrosine 389 lines the pyridoxal 5'-phosphate pocket.

This sequence belongs to the Orn/Lys/Arg decarboxylase class-II family. In terms of assembly, homodimer. Only the dimer is catalytically active, as the active sites are constructed of residues from both monomers. Pyridoxal 5'-phosphate is required as a cofactor.

It carries out the reaction L-ornithine + H(+) = putrescine + CO2. It functions in the pathway amine and polyamine biosynthesis; putrescine biosynthesis via L-ornithine pathway; putrescine from L-ornithine: step 1/1. Inhibited by antizymes (AZs) OAZ1, OAZ2 and OAZ3 in response to polyamine levels. AZs inhibit the assembly of the functional homodimer by binding to ODC monomers. Additionally, OAZ1 targets ODC monomers for ubiquitin-independent proteolytic destruction by the 26S proteasome. In terms of biological role, catalyzes the first and rate-limiting step of polyamine biosynthesis that converts ornithine into putrescine, which is the precursor for the polyamines, spermidine and spermine. Polyamines are essential for cell proliferation and are implicated in cellular processes, ranging from DNA replication to apoptosis. This is Ornithine decarboxylase (Odc1) from Rattus norvegicus (Rat).